The chain runs to 495 residues: Galactose-1-phosphate uridylyltransferase (495 aa).

It belongs to the galactose-1-phosphate uridylyltransferase type 2 family.

It is found in the cytoplasm. It catalyses the reaction alpha-D-galactose 1-phosphate + UDP-alpha-D-glucose = alpha-D-glucose 1-phosphate + UDP-alpha-D-galactose. It participates in carbohydrate metabolism; galactose metabolism. This chain is Galactose-1-phosphate uridylyltransferase, found in Ligilactobacillus salivarius (strain UCC118) (Lactobacillus salivarius).